We begin with the raw amino-acid sequence, 303 residues long: Tyrosine recombinase XerC (303 aa).

The Core-binding (CB) domain occupies 3–89 (IQNDQWVSAF…TLRSFYQFLV (87 aa)). Residues 110–297 (KLPSFLYEEE…TKDRLRDVYR (188 aa)) enclose the Tyr recombinase domain. Residues Arg-150, Lys-174, His-249, Arg-252, and His-275 contribute to the active site. Catalysis depends on Tyr-284, which acts as the O-(3'-phospho-DNA)-tyrosine intermediate.

This sequence belongs to the 'phage' integrase family. XerC subfamily. As to quaternary structure, forms a cyclic heterotetrameric complex composed of two molecules of XerC and two molecules of XerD.

It localises to the cytoplasm. Functionally, site-specific tyrosine recombinase, which acts by catalyzing the cutting and rejoining of the recombining DNA molecules. The XerC-XerD complex is essential to convert dimers of the bacterial chromosome into monomers to permit their segregation at cell division. It also contributes to the segregational stability of plasmids. The sequence is that of Tyrosine recombinase XerC from Halalkalibacterium halodurans (strain ATCC BAA-125 / DSM 18197 / FERM 7344 / JCM 9153 / C-125) (Bacillus halodurans).